We begin with the raw amino-acid sequence, 318 residues long: MEQREQPAVQVPSLDGVTRERFLRDVYPRREPVVLKGMELGPCTTKWTVDYLSQAAGSKEVKIHVSAVPQMDFLSKNFVYRTLPFDVFVRRAAEVKHKDYFLSEDEKYYLRSVGEDVRKDIADIRKQFPVLAEDVQIPEYFEKEQFFSSVFRISSAGLQLWTHYDVMDNFLIQVTGRKRVVLYSPRDVPYLYLSGTKSEVLDVDNPDFEKYPLFAKAKRYQCYLEAGDVLFIPAMWFHNVISEEFGVALNVFWKHLPAECYDKSDTYGNKDPTAASRAIQILDRALKTLEELPEEYRDFYARRMVLRIQEKAYRNDNG.

Y109 contributes to the 2-oxoglutarate binding site. Residues 126–270 enclose the JmjC domain; the sequence is KQFPVLAEDV…YDKSDTYGNK (145 aa). H163 and D165 together coordinate Fe cation. 2-oxoglutarate contacts are provided by N169 and K178. H238 is a Fe cation binding site.

The protein belongs to the TYW5 family. As to quaternary structure, homodimer. It depends on Fe(2+) as a cofactor.

The catalysed reaction is 7-[(3S)-3-amino-3-carboxypropyl]wyosine(37) in tRNA(Phe) + 2-oxoglutarate + O2 = 7-(2-hydroxy-3-amino-3-carboxypropyl)wyosine(37) in tRNA(Phe) + succinate + CO2. The protein operates within tRNA modification; wybutosine-tRNA(Phe) biosynthesis. TRNA hydroxylase that acts as a component of the wybutosine biosynthesis pathway. Wybutosine is a hyper modified guanosine with a tricyclic base found at the 3'-position adjacent to the anticodon of eukaryotic phenylalanine tRNA. Catalyzes the hydroxylation of 7-(a-amino-a-carboxypropyl)wyosine (yW-72) into undermodified hydroxywybutosine (OHyW*). OHyW* being further transformed into hydroxywybutosine (OHyW) by LCMT2/TYW4. OHyW is a derivative of wybutosine found in higher eukaryotes. In Gallus gallus (Chicken), this protein is tRNA wybutosine-synthesizing protein 5 (TYW5).